The following is a 597-amino-acid chain: MKKIRQPIIAVLGHVDHGKTSLLDRIRNTHVAEKEAGGITQHIGATEVPIDVVKQLAGPLLSLWKGEIKLPGLLFIDTPGHEAFTSLRARGGSLADLAILIIDVNEGFQPQTLESIEILRKYKTPFVVAANKIDRIKGWKVVENEPFLVNIKKQDQRAQQDLETKLWELIGKFYELGFQVNRFDRVKDFRKELAIIPISAKYGIGVPELLVLISGLAQKYLEEKLKIEVEGPARGTILEVREEIGFGTTIDVIIYDGTLRKDDTIVVGGKDKAIVTKIRALLKPKPLDEIRDPRYKFDHVNEVSASAGIKIAAPDLEEALAGSPVIAVRDEEELKRARREILEQIKSVIISTDKVGVIVKADTIGSLEALSKELHEKNIPIRKADVGNISKTDVMEALSVKEEEPFYGVVIGFNVKVNEDAEEVAKAKNIPLFVNNIIYKLIEDYEAWIKAEEEKKKKEILANTKFPGVIKLFPDERYVFRRSHPAIVGIEVLEGRIKPGYPLIKQNGDKVGVIKSIKSKEDFLQEAKKGDQVAVAIEGAIVGRHIHPGEILYVDISKDDAIRLVKELRDMLDDTDIEALKNTAKVKAQKDPFWGAL.

Residues 4-221 (IRQPIIAVLG…LISGLAQKYL (218 aa)) form the tr-type G domain. Residues 13-20 (GHVDHGKT) form a G1 region. 13-20 (GHVDHGKT) is a GTP binding site. The tract at residues 38-42 (GITQH) is G2. Positions 77–80 (DTPG) are G3. Residues 77-81 (DTPGH) and 131-134 (NKID) each bind GTP. The segment at 131 to 134 (NKID) is G4. The interval 199–201 (SAK) is G5.

The protein belongs to the TRAFAC class translation factor GTPase superfamily. Classic translation factor GTPase family. IF-2 subfamily.

Its function is as follows. Function in general translation initiation by promoting the binding of the formylmethionine-tRNA to ribosomes. Seems to function along with eIF-2. In Thermococcus sibiricus (strain DSM 12597 / MM 739), this protein is Probable translation initiation factor IF-2.